We begin with the raw amino-acid sequence, 321 residues long: uncharacterized protein (321 aa).

Positions M1–A22 are cleaved as a signal peptide.

This sequence belongs to the bacterial solute-binding protein 1 family. WtpA subfamily.

This is an uncharacterized protein from Petrotoga mobilis (strain DSM 10674 / SJ95).